A 247-amino-acid chain; its full sequence is Ribonuclease PH (247 aa).

Phosphate-binding positions include Arg-96 and 134-136 (GTR).

It belongs to the RNase PH family. As to quaternary structure, homohexameric ring arranged as a trimer of dimers.

It catalyses the reaction tRNA(n+1) + phosphate = tRNA(n) + a ribonucleoside 5'-diphosphate. Its function is as follows. Phosphorolytic 3'-5' exoribonuclease that plays an important role in tRNA 3'-end maturation. Removes nucleotide residues following the 3'-CCA terminus of tRNAs; can also add nucleotides to the ends of RNA molecules by using nucleoside diphosphates as substrates, but this may not be physiologically important. Probably plays a role in initiation of 16S rRNA degradation (leading to ribosome degradation) during starvation. The chain is Ribonuclease PH from Tropheryma whipplei (strain TW08/27) (Whipple's bacillus).